The primary structure comprises 422 residues: Elongation factor 1-alpha (422 aa).

In terms of domain architecture, tr-type G spans 5 to 221 (KPHMNLAVIG…NSLKEPEKPS (217 aa)). The G1 stretch occupies residues 14 to 21 (GHIDHGKS). 14–21 (GHIDHGKS) contributes to the GTP binding site. Residue serine 21 coordinates Mg(2+). The tract at residues 70 to 74 (GITID) is G2. Positions 91–94 (DCPG) are G3. GTP contacts are provided by residues 91–95 (DCPGH) and 146–149 (NKMD). The G4 stretch occupies residues 146–149 (NKMD). Positions 185–187 (SAF) are G5.

This sequence belongs to the TRAFAC class translation factor GTPase superfamily. Classic translation factor GTPase family. EF-Tu/EF-1A subfamily.

The protein resides in the cytoplasm. It carries out the reaction GTP + H2O = GDP + phosphate + H(+). Functionally, GTP hydrolase that promotes the GTP-dependent binding of aminoacyl-tRNA to the A-site of ribosomes during protein biosynthesis. The protein is Elongation factor 1-alpha of Methanosarcina mazei (strain ATCC BAA-159 / DSM 3647 / Goe1 / Go1 / JCM 11833 / OCM 88) (Methanosarcina frisia).